A 127-amino-acid chain; its full sequence is Biogenesis of lysosome-related organelles complex 1 subunit BLS1 (127 aa).

A disordered region spans residues 103–127 (KNSHNTNHGGCNKTKNSSKDKLLDK). Residues 105–117 (SHNTNHGGCNKTK) are compositionally biased toward polar residues.

This sequence belongs to the BLOC1S1 family. In terms of assembly, component of the biogenesis of lysosome-related organelles complex-1 (BLOC-1).

It is found in the endosome. In terms of biological role, component of the biogenesis of lysosome-related organelles complex-1 (BLOC-1), a complex involved in endosomal cargo sorting. The sequence is that of Biogenesis of lysosome-related organelles complex 1 subunit BLS1 (BLS1) from Vanderwaltozyma polyspora (strain ATCC 22028 / DSM 70294 / BCRC 21397 / CBS 2163 / NBRC 10782 / NRRL Y-8283 / UCD 57-17) (Kluyveromyces polysporus).